The sequence spans 391 residues: 1-deoxy-D-xylulose 5-phosphate reductoisomerase (391 aa).

NADPH-binding residues include Thr17, Gly18, Ser19, Ile20, Asn47, and Asn130. Lys131 contributes to the 1-deoxy-D-xylulose 5-phosphate binding site. Position 132 (Glu132) interacts with NADPH. A Mn(2+)-binding site is contributed by Asp156. Ser157, Glu158, Ser182, and His205 together coordinate 1-deoxy-D-xylulose 5-phosphate. Mn(2+) is bound at residue Glu158. Residue Gly211 coordinates NADPH. Residues Ser218, Asn223, Lys224, and Glu227 each contribute to the 1-deoxy-D-xylulose 5-phosphate site. Glu227 contacts Mn(2+).

This sequence belongs to the DXR family. Mg(2+) serves as cofactor. Mn(2+) is required as a cofactor.

It carries out the reaction 2-C-methyl-D-erythritol 4-phosphate + NADP(+) = 1-deoxy-D-xylulose 5-phosphate + NADPH + H(+). Its pathway is isoprenoid biosynthesis; isopentenyl diphosphate biosynthesis via DXP pathway; isopentenyl diphosphate from 1-deoxy-D-xylulose 5-phosphate: step 1/6. Its function is as follows. Catalyzes the NADPH-dependent rearrangement and reduction of 1-deoxy-D-xylulose-5-phosphate (DXP) to 2-C-methyl-D-erythritol 4-phosphate (MEP). The sequence is that of 1-deoxy-D-xylulose 5-phosphate reductoisomerase from Sinorhizobium fredii (strain NBRC 101917 / NGR234).